A 308-amino-acid polypeptide reads, in one-letter code: GDP-L-colitose synthase (308 aa).

NADP(+) contacts are provided by residues 7 to 13 (GAGGMVG) and 101 to 104 (LGSS). Tyr-132 functions as the Proton donor/acceptor in the catalytic mechanism. NADP(+)-binding positions include Lys-136, 160–163 (PCNL), and His-176. Substrate contacts are provided by Lys-184, Trp-199, and Arg-206.

Belongs to the NAD(P)-dependent epimerase/dehydratase family. Fucose synthase subfamily. In terms of assembly, homodimer.

It carries out the reaction GDP-beta-L-colitose + NAD(+) = GDP-4-dehydro-3,6-dideoxy-alpha-D-mannose + NADH + H(+). The enzyme catalyses GDP-beta-L-colitose + NADP(+) = GDP-4-dehydro-3,6-dideoxy-alpha-D-mannose + NADPH + H(+). It functions in the pathway nucleotide-sugar metabolism; GDP-L-colitose biosynthesis. Its function is as follows. Involved in the biosynthesis of the L-colitose (3,6-dideoxyl-L-xylo-hexose) present in the O-antigen region of lipopolysaccharides (LPS) where it serves as antigenic determinant and are vital for bacterial defense and survival. Catalyzes the two-step NADP-dependent conversion of GDP-4-keto-3,6-dideoxy-D-mannose to GDP-L-colitose. ColC is a bifunctional enzyme catalyzing the C-5 epimerization of GDP-4-keto-3,6-dideoxy-D-mannose and the subsequent C-4 keto reduction of the resulting L-epimer to give GDP-L-colitose. It can use both NADP(+) and NAD(+) as electron acceptor, with a slight preference for NADP(+). In Yersinia pseudotuberculosis, this protein is GDP-L-colitose synthase.